A 207-amino-acid chain; its full sequence is Large ribosomal subunit protein uL3c (207 aa).

Residues 115–151 (IGKGFAGNQKRHNFSRGPMTHGSKNHRLPGSIGAGST) form a disordered region.

It belongs to the universal ribosomal protein uL3 family. Part of the 50S ribosomal subunit.

It localises to the plastid. Its subcellular location is the chloroplast. Its function is as follows. One of the primary rRNA binding proteins, it binds directly near the 3'-end of the 23S rRNA, where it nucleates assembly of the 50S subunit. The sequence is that of Large ribosomal subunit protein uL3c (rpl3) from Emiliania huxleyi (Coccolithophore).